Consider the following 215-residue polypeptide: Cytochrome c biogenesis ATP-binding export protein CcmA (215 aa).

The ABC transporter domain occupies leucine 3 to asparagine 211. Position 35–42 (glycine 35–serine 42) interacts with ATP.

The protein belongs to the ABC transporter superfamily. CcmA exporter (TC 3.A.1.107) family. In terms of assembly, the complex is composed of two ATP-binding proteins (CcmA) and two transmembrane proteins (CcmB).

The protein localises to the cell inner membrane. The catalysed reaction is heme b(in) + ATP + H2O = heme b(out) + ADP + phosphate + H(+). Part of the ABC transporter complex CcmAB involved in the biogenesis of c-type cytochromes; once thought to export heme, this seems not to be the case, but its exact role is uncertain. Responsible for energy coupling to the transport system. The sequence is that of Cytochrome c biogenesis ATP-binding export protein CcmA from Rhizobium johnstonii (strain DSM 114642 / LMG 32736 / 3841) (Rhizobium leguminosarum bv. viciae).